The chain runs to 89 residues: UPF0367 protein PMM0124 (89 aa).

The protein belongs to the UPF0367 family.

This is UPF0367 protein PMM0124 from Prochlorococcus marinus subsp. pastoris (strain CCMP1986 / NIES-2087 / MED4).